Reading from the N-terminus, the 198-residue chain is Alkyl hydroperoxide reductase C (198 aa).

A Thioredoxin domain is found at 2–163 (TLVTQKAPNF…MIRMIDALNF (162 aa)). The Cysteine sulfenic acid (-SOH) intermediate role is filled by Cys50.

The protein belongs to the peroxiredoxin family. AhpC/Prx1 subfamily. As to quaternary structure, homodimer; disulfide-linked, upon oxidation. 5 homodimers assemble to form a ring-like decamer.

It is found in the cytoplasm. The enzyme catalyses a hydroperoxide + NADH + H(+) = an alcohol + NAD(+) + H2O. In terms of biological role, thiol-specific peroxidase that catalyzes the reduction of hydrogen peroxide and organic hydroperoxides to water and alcohols, respectively. Plays a role in cell protection against oxidative stress by detoxifying peroxides. This chain is Alkyl hydroperoxide reductase C, found in Buchnera aphidicola subsp. Schizaphis graminum (strain Sg).